A 389-amino-acid polypeptide reads, in one-letter code: Succinate--CoA ligase [ADP-forming] subunit beta (389 aa).

Positions 9–244 (KQLLAEYGIP…KTQEDETEVT (236 aa)) constitute an ATP-grasp domain. Residues lysine 46, 53-55 (GRG), glycine 102, and glutamate 107 contribute to the ATP site. Positions 199 and 213 each coordinate Mg(2+). Substrate is bound by residues asparagine 264 and 321–323 (GIV).

Belongs to the succinate/malate CoA ligase beta subunit family. As to quaternary structure, heterotetramer of two alpha and two beta subunits. It depends on Mg(2+) as a cofactor.

The catalysed reaction is succinate + ATP + CoA = succinyl-CoA + ADP + phosphate. The enzyme catalyses GTP + succinate + CoA = succinyl-CoA + GDP + phosphate. The protein operates within carbohydrate metabolism; tricarboxylic acid cycle; succinate from succinyl-CoA (ligase route): step 1/1. Succinyl-CoA synthetase functions in the citric acid cycle (TCA), coupling the hydrolysis of succinyl-CoA to the synthesis of either ATP or GTP and thus represents the only step of substrate-level phosphorylation in the TCA. The beta subunit provides nucleotide specificity of the enzyme and binds the substrate succinate, while the binding sites for coenzyme A and phosphate are found in the alpha subunit. This is Succinate--CoA ligase [ADP-forming] subunit beta from Xanthomonas axonopodis pv. citri (strain 306).